The sequence spans 258 residues: Ribosomal RNA small subunit methyltransferase J (258 aa).

Residues Glu123–Arg124 and Asp177 each bind S-adenosyl-L-methionine. Residues Ile232–Ala258 are disordered. Basic and acidic residues predominate over residues His239–Pro252.

It belongs to the methyltransferase superfamily. RsmJ family.

The protein localises to the cytoplasm. It carries out the reaction guanosine(1516) in 16S rRNA + S-adenosyl-L-methionine = N(2)-methylguanosine(1516) in 16S rRNA + S-adenosyl-L-homocysteine + H(+). Specifically methylates the guanosine in position 1516 of 16S rRNA. This chain is Ribosomal RNA small subunit methyltransferase J, found in Pseudomonas putida (strain ATCC 47054 / DSM 6125 / CFBP 8728 / NCIMB 11950 / KT2440).